The chain runs to 302 residues: ATP synthase gamma chain (302 aa).

It belongs to the ATPase gamma chain family. F-type ATPases have 2 components, CF(1) - the catalytic core - and CF(0) - the membrane proton channel. CF(1) has five subunits: alpha(3), beta(3), gamma(1), delta(1), epsilon(1). CF(0) has three main subunits: a, b and c.

The protein localises to the cell membrane. Produces ATP from ADP in the presence of a proton gradient across the membrane. The gamma chain is believed to be important in regulating ATPase activity and the flow of protons through the CF(0) complex. In Enterococcus faecalis (strain ATCC 700802 / V583), this protein is ATP synthase gamma chain.